A 434-amino-acid chain; its full sequence is Serine hydroxymethyltransferase (434 aa).

Residues leucine 133 and glycine 137 to leucine 139 contribute to the (6S)-5,6,7,8-tetrahydrofolate site. At lysine 242 the chain carries N6-(pyridoxal phosphate)lysine.

The protein belongs to the SHMT family. As to quaternary structure, homodimer. Requires pyridoxal 5'-phosphate as cofactor.

The protein localises to the cytoplasm. The catalysed reaction is (6R)-5,10-methylene-5,6,7,8-tetrahydrofolate + glycine + H2O = (6S)-5,6,7,8-tetrahydrofolate + L-serine. The protein operates within one-carbon metabolism; tetrahydrofolate interconversion. It functions in the pathway amino-acid biosynthesis; glycine biosynthesis; glycine from L-serine: step 1/1. Catalyzes the reversible interconversion of serine and glycine with tetrahydrofolate (THF) serving as the one-carbon carrier. This reaction serves as the major source of one-carbon groups required for the biosynthesis of purines, thymidylate, methionine, and other important biomolecules. Also exhibits THF-independent aldolase activity toward beta-hydroxyamino acids, producing glycine and aldehydes, via a retro-aldol mechanism. The protein is Serine hydroxymethyltransferase of Hyphomicrobium methylovorum.